Reading from the N-terminus, the 229-residue chain is UPF0758 protein GSU0386 (229 aa).

The MPN domain maps to 107–229; the sequence is RFTSPEQVYN…FTSFVSAGLL (123 aa). The Zn(2+) site is built by His178, His180, and Asp191. The JAMM motif motif lies at 178–191; that stretch reads HNHPTGDPAPSRED.

This sequence belongs to the UPF0758 family.

The polypeptide is UPF0758 protein GSU0386 (Geobacter sulfurreducens (strain ATCC 51573 / DSM 12127 / PCA)).